The chain runs to 371 residues: Cathepsin L1 (371 aa).

Positions 1 to 48 are cleaved as a signal peptide; sequence MNHLGVFETRFRPRTRHKSQRAQLIPEQITMRTAVLLPLLALLAVAQA. A propeptide spans 49–153 (activation peptide); sequence VSFADVVMEE…VTFISPAHVT (105 aa). An N-linked (GlcNAc...) asparagine glycan is attached at asparagine 127. Cystine bridges form between cysteine 175-cysteine 218, cysteine 209-cysteine 251, and cysteine 310-cysteine 360. Cysteine 178 is a catalytic residue. Histidine 317 is an active-site residue. A propeptide spanning residues 327–329 is cleaved from the precursor; it reads DES. Asparagine 338 is a catalytic residue.

The protein belongs to the peptidase C1 family. In terms of assembly, dimer of a heavy and a light chain linked by disulfide bonds. In terms of tissue distribution, in the embryo, predominantly expressed in the midgut. Also expressed in larval alimentary organs such as salivary gland and midgut including gastric caeca.

It localises to the lysosome. It carries out the reaction Specificity close to that of papain. As compared to cathepsin B, cathepsin L exhibits higher activity toward protein substrates, but has little activity on Z-Arg-Arg-NHMec, and no peptidyl-dipeptidase activity.. Functionally, important for the overall degradation of proteins in lysosomes. Essential for adult male and female fertility. May play a role in digestion. This chain is Cathepsin L1, found in Drosophila melanogaster (Fruit fly).